The sequence spans 510 residues: MTKRALLSVSDKQGLTDFAKGLVALDYELISTGGTKKALEAADIPVIGIEEVTGFPEMLDGRVKTLHPKVHAGLLARRDLPAHMAQLKAAGIQPIDMVVVNLYPFKATIQQPDVTQAEAIEQIDIGGPSMLRSAAKNFAAVLPIVDPADYEQILADLQTDAVTPALRQRLAAKVFQHTAAYDALIAQYLTTEEFPEKLTLTYDKKQALRYGENSHQKAAFYENALPTHFSITGAKQIHGKELSYNNIKDADAALRMVSEYQQPAVVAMKHMNPCGVGLGTTIEAAWDKAYEADSISIFGGIIALNRPVDLATAEKMHALFLEIIIAPSFDDDAFAILAKKKNLRLMTVDFEQTHTADKFETISVGGGLLRQEVDAAFETPADFTVVTVTQPTPAQLKALAFGQQVVKHVKSNAVVVTTADRTLGIGSGQMNRIDSTKIAIGKAMKQAGYENAILASDAFFPMDDCVEYAAQHGIRAIVQPGGSIRDKDSIAMADRYGIAMVTTGVRHFRH.

The region spanning 1-145 is the MGS-like domain; it reads MTKRALLSVS…KNFAAVLPIV (145 aa).

This sequence belongs to the PurH family.

It catalyses the reaction (6R)-10-formyltetrahydrofolate + 5-amino-1-(5-phospho-beta-D-ribosyl)imidazole-4-carboxamide = 5-formamido-1-(5-phospho-D-ribosyl)imidazole-4-carboxamide + (6S)-5,6,7,8-tetrahydrofolate. The catalysed reaction is IMP + H2O = 5-formamido-1-(5-phospho-D-ribosyl)imidazole-4-carboxamide. It participates in purine metabolism; IMP biosynthesis via de novo pathway; 5-formamido-1-(5-phospho-D-ribosyl)imidazole-4-carboxamide from 5-amino-1-(5-phospho-D-ribosyl)imidazole-4-carboxamide (10-formyl THF route): step 1/1. Its pathway is purine metabolism; IMP biosynthesis via de novo pathway; IMP from 5-formamido-1-(5-phospho-D-ribosyl)imidazole-4-carboxamide: step 1/1. The polypeptide is Bifunctional purine biosynthesis protein PurH (Lactiplantibacillus plantarum (strain ATCC BAA-793 / NCIMB 8826 / WCFS1) (Lactobacillus plantarum)).